The sequence spans 305 residues: UDP-3-O-acyl-N-acetylglucosamine deacetylase (305 aa).

The Zn(2+) site is built by histidine 79, histidine 238, and aspartate 242. Histidine 265 acts as the Proton donor in catalysis.

Belongs to the LpxC family. Zn(2+) serves as cofactor.

The catalysed reaction is a UDP-3-O-[(3R)-3-hydroxyacyl]-N-acetyl-alpha-D-glucosamine + H2O = a UDP-3-O-[(3R)-3-hydroxyacyl]-alpha-D-glucosamine + acetate. Its pathway is glycolipid biosynthesis; lipid IV(A) biosynthesis; lipid IV(A) from (3R)-3-hydroxytetradecanoyl-[acyl-carrier-protein] and UDP-N-acetyl-alpha-D-glucosamine: step 2/6. Catalyzes the hydrolysis of UDP-3-O-myristoyl-N-acetylglucosamine to form UDP-3-O-myristoylglucosamine and acetate, the committed step in lipid A biosynthesis. The polypeptide is UDP-3-O-acyl-N-acetylglucosamine deacetylase (Colwellia psychrerythraea (strain 34H / ATCC BAA-681) (Vibrio psychroerythus)).